Consider the following 350-residue polypeptide: Anthranilate phosphoribosyltransferase (350 aa).

5-phospho-alpha-D-ribose 1-diphosphate contacts are provided by residues Gly-88, 91–92 (GD), Thr-96, 98–101 (NIST), 116–124 (KHGGRSVSS), and Ser-128. An anthranilate-binding site is contributed by Gly-88. Ser-100 contributes to the Mg(2+) binding site. Residue Arg-174 participates in anthranilate binding. Residues Asp-233 and Glu-234 each contribute to the Mg(2+) site.

The protein belongs to the anthranilate phosphoribosyltransferase family. In terms of assembly, homodimer. Mg(2+) is required as a cofactor.

It catalyses the reaction N-(5-phospho-beta-D-ribosyl)anthranilate + diphosphate = 5-phospho-alpha-D-ribose 1-diphosphate + anthranilate. It functions in the pathway amino-acid biosynthesis; L-tryptophan biosynthesis; L-tryptophan from chorismate: step 2/5. Its function is as follows. Catalyzes the transfer of the phosphoribosyl group of 5-phosphorylribose-1-pyrophosphate (PRPP) to anthranilate to yield N-(5'-phosphoribosyl)-anthranilate (PRA). This chain is Anthranilate phosphoribosyltransferase, found in Albidiferax ferrireducens (strain ATCC BAA-621 / DSM 15236 / T118) (Rhodoferax ferrireducens).